Reading from the N-terminus, the 257-residue chain is Tryptophan synthase alpha chain (257 aa).

Residues Glu51 and Asp62 each act as proton acceptor in the active site.

This sequence belongs to the TrpA family. Tetramer of two alpha and two beta chains.

It carries out the reaction (1S,2R)-1-C-(indol-3-yl)glycerol 3-phosphate + L-serine = D-glyceraldehyde 3-phosphate + L-tryptophan + H2O. It participates in amino-acid biosynthesis; L-tryptophan biosynthesis; L-tryptophan from chorismate: step 5/5. Its function is as follows. The alpha subunit is responsible for the aldol cleavage of indoleglycerol phosphate to indole and glyceraldehyde 3-phosphate. This is Tryptophan synthase alpha chain from Nitratidesulfovibrio vulgaris (strain DP4) (Desulfovibrio vulgaris).